The chain runs to 229 residues: Cytidylate kinase (229 aa).

12 to 20 (GPSGSGKGT) lines the ATP pocket.

The protein belongs to the cytidylate kinase family. Type 1 subfamily.

Its subcellular location is the cytoplasm. The enzyme catalyses CMP + ATP = CDP + ADP. The catalysed reaction is dCMP + ATP = dCDP + ADP. The sequence is that of Cytidylate kinase from Pseudomonas syringae pv. syringae (strain B728a).